A 95-amino-acid chain; its full sequence is CRISPR-associated endoribonuclease Cas2 3 (95 aa).

Asp7 serves as a coordination point for Mg(2+).

This sequence belongs to the CRISPR-associated endoribonuclease Cas2 protein family. In terms of assembly, homodimer, forms a heterotetramer with a Cas1 homodimer. It depends on Mg(2+) as a cofactor.

CRISPR (clustered regularly interspaced short palindromic repeat), is an adaptive immune system that provides protection against mobile genetic elements (viruses, transposable elements and conjugative plasmids). CRISPR clusters contain sequences complementary to antecedent mobile elements and target invading nucleic acids. CRISPR clusters are transcribed and processed into CRISPR RNA (crRNA). Functions as a ssRNA-specific endoribonuclease. Involved in the integration of spacer DNA into the CRISPR cassette. This Rhodospirillum rubrum (strain ATCC 11170 / ATH 1.1.1 / DSM 467 / LMG 4362 / NCIMB 8255 / S1) protein is CRISPR-associated endoribonuclease Cas2 3.